Here is a 143-residue protein sequence, read N- to C-terminus: Putative pre-16S rRNA nuclease (143 aa).

Belongs to the YqgF nuclease family.

The protein localises to the cytoplasm. In terms of biological role, could be a nuclease involved in processing of the 5'-end of pre-16S rRNA. In Mycoplasma capricolum subsp. capricolum (strain California kid / ATCC 27343 / NCTC 10154), this protein is Putative pre-16S rRNA nuclease.